Consider the following 122-residue polypeptide: Replication factor A protein 3 (122 aa).

It belongs to the replication factor A protein 3 family. Component of the heterotrimeric canonical replication protein A complex (RPA). The N-terminus is blocked.

Its subcellular location is the nucleus. Its function is as follows. As part of the replication protein A (RPA/RP-A), a single-stranded DNA-binding heterotrimeric complex, may play an essential role in DNA replication, recombination and repair. Binds and stabilizes single-stranded DNA intermediates, preventing complementary DNA reannealing and recruiting different proteins involved in DNA metabolism. Stimulates the activity of a cognate strand exchange protein (SEP1). The polypeptide is Replication factor A protein 3 (RFA3) (Saccharomyces cerevisiae (strain ATCC 204508 / S288c) (Baker's yeast)).